Consider the following 345-residue polypeptide: Adenylosuccinate synthetase (345 aa).

GTP-binding positions include 18–24 and 48–50; these read GDEGKGK and GHT. The active-site Proton acceptor is Asp-19. Mg(2+) contacts are provided by Asp-19 and Gly-48. Residues 19 to 22, 46 to 49, Thr-133, Arg-147, Gln-185, Thr-200, and Arg-262 contribute to the IMP site; these read DEGK and NAGH. The Proton donor role is filled by His-49. 258 to 264 lines the substrate pocket; that stretch reads TVTGRRR. GTP-binding positions include Arg-264, 290–292, and 330–332; these read GLD and STG.

This sequence belongs to the adenylosuccinate synthetase family. As to quaternary structure, homodimer. The cofactor is Mg(2+).

It localises to the cytoplasm. It catalyses the reaction IMP + L-aspartate + GTP = N(6)-(1,2-dicarboxyethyl)-AMP + GDP + phosphate + 2 H(+). The protein operates within purine metabolism; AMP biosynthesis via de novo pathway; AMP from IMP: step 1/2. Plays an important role in the de novo pathway of purine nucleotide biosynthesis. Catalyzes the first committed step in the biosynthesis of AMP from IMP. In Methanocaldococcus jannaschii (strain ATCC 43067 / DSM 2661 / JAL-1 / JCM 10045 / NBRC 100440) (Methanococcus jannaschii), this protein is Adenylosuccinate synthetase.